Here is a 235-residue protein sequence, read N- to C-terminus: Small ribosomal subunit protein uS2c (235 aa).

Belongs to the universal ribosomal protein uS2 family.

It localises to the plastid. It is found in the chloroplast. The sequence is that of Small ribosomal subunit protein uS2c (rps2) from Guillardia theta (Cryptophyte).